A 358-amino-acid polypeptide reads, in one-letter code: Adenosine deaminase (358 aa).

Residues H14 and H16 each contribute to the Zn(2+) site. Substrate contacts are provided by H16, D18, and G183. H212 contributes to the Zn(2+) binding site. E215 serves as the catalytic Proton donor. D294 is a binding site for Zn(2+). Residue D295 coordinates substrate.

It belongs to the metallo-dependent hydrolases superfamily. Adenosine and AMP deaminases family. Requires Zn(2+) as cofactor.

Its subcellular location is the cell membrane. It localises to the cell junction. The protein localises to the cytoplasmic vesicle lumen. The protein resides in the cytoplasm. It is found in the lysosome. The catalysed reaction is adenosine + H2O + H(+) = inosine + NH4(+). It catalyses the reaction 2'-deoxyadenosine + H2O + H(+) = 2'-deoxyinosine + NH4(+). Its function is as follows. Catalyzes the hydrolytic deamination of adenosine and 2-deoxyadenosine. Plays an important role in purine metabolism and in adenosine homeostasis. Modulates signaling by extracellular adenosine, and so contributes indirectly to cellular signaling events. May act as a positive regulator of T-cell coactivation. The sequence is that of Adenosine deaminase (ada) from Xenopus tropicalis (Western clawed frog).